The following is a 186-amino-acid chain: Protein MTH_152 (186 aa).

This sequence belongs to the flavoredoxin family. In terms of assembly, homodimer. Requires FMN as cofactor.

This is Protein MTH_152 from Methanothermobacter thermautotrophicus (strain ATCC 29096 / DSM 1053 / JCM 10044 / NBRC 100330 / Delta H) (Methanobacterium thermoautotrophicum).